We begin with the raw amino-acid sequence, 329 residues long: Tryptophan--tRNA ligase (329 aa).

ATP contacts are provided by residues 9–11 (QPS) and 17–18 (GN). A 'HIGH' region motif is present at residues 10–18 (PSGIPTIGN). D133 is a binding site for L-tryptophan. Residues 145–147 (GDD), V184, and 193–197 (KMSKS) contribute to the ATP site. Positions 193–197 (KMSKS) match the 'KMSKS' region motif.

The protein belongs to the class-I aminoacyl-tRNA synthetase family. As to quaternary structure, homodimer.

The protein localises to the cytoplasm. The catalysed reaction is tRNA(Trp) + L-tryptophan + ATP = L-tryptophyl-tRNA(Trp) + AMP + diphosphate + H(+). Functionally, catalyzes the attachment of tryptophan to tRNA(Trp). This is Tryptophan--tRNA ligase from Staphylococcus aureus (strain MRSA252).